Here is a 967-residue protein sequence, read N- to C-terminus: Phosphoenolpyruvate carboxylase 1 (967 aa).

Phosphoserine is present on S11. Catalysis depends on residues H173 and K602. S704 is modified (phosphoserine).

It belongs to the PEPCase type 1 family. As to quaternary structure, homotetramer. It depends on Mg(2+) as a cofactor. Requires Mn(2+) as cofactor. In terms of processing, the phosphorylation of Ser-11 is reversibly promoted by inorganic phosphate (Pi) deprivation. Enhanced activity by phosphorylation at pH 7.3 by lowering Km and sensitivity to inhibition by L-malate and L-aspartate, while enhancing activation by glucose 6-phosphate. As to expression, expressed in all plant organs, with higher levels in roots.

The protein localises to the cytoplasm. It catalyses the reaction oxaloacetate + phosphate = phosphoenolpyruvate + hydrogencarbonate. By light-reversible phosphorylation. Activated by inorganic phosphate (Pi) deprivation and glucose 6-phosphate. Inhibited by L-malate and L-aspartate. Its function is as follows. Through the carboxylation of phosphoenolpyruvate (PEP) it forms oxaloacetate, a four-carbon dicarboxylic acid source for the tricarboxylic acid cycle. Contributes probably to the adaptation to inorganic phosphate (Pi) deprivation. The protein is Phosphoenolpyruvate carboxylase 1 (PPC1) of Arabidopsis thaliana (Mouse-ear cress).